Reading from the N-terminus, the 129-residue chain is Insulin-like growth factor 2 (129 aa).

The N-terminal stretch at 1-24 (MGVPMGKSLLAPLTFLALASCCFA) is a signal peptide. The interval 25–52 (AYRPSETLCGGELVDTLQFVCGDRGFYF) is b. Disulfide bonds link Cys-33–Cys-72, Cys-45–Cys-85, and Cys-71–Cys-76. The segment at 53 to 65 (SRPASRVSRRSSR) is c. Residues 66-86 (GIVEECCFRSCDLALLETYCA) form an a region. The tract at residues 87-92 (TPAKSE) is d. Positions 93–129 (RDVSTPPTVLPDNFPRYPVGKFFQYDTWKQSAQRLRR) are cleaved as a propeptide — e peptide.

This sequence belongs to the insulin family. In terms of assembly, interacts with MYORG; this interaction is required for IGF2 secretion. Interacts with integrins ITGAV:ITGB3 and ITGA6:ITGB4; integrin-binding is required for IGF2 signaling. In terms of processing, proteolytically processed by PCSK4, proIGF2 is cleaved at Arg-129 and Arg-92 to generate big-IGF2 and mature IGF2.

The protein localises to the secreted. In terms of biological role, the insulin-like growth factors possess growth-promoting activity. Major fetal growth hormone in mammals. Plays a key role in regulating fetoplacental development. IGF2 is influenced by placental lactogen. Also involved in tissue differentiation. In adults, involved in glucose metabolism in adipose tissue, skeletal muscle and liver. Acts as a ligand for integrin which is required for IGF2 signaling. Positively regulates myogenic transcription factor MYOD1 function by facilitating the recruitment of transcriptional coactivators, thereby controlling muscle terminal differentiation. Inhibits myoblast differentiation and modulates metabolism via increasing the mitochondrial respiration rate. Preptin undergoes glucose-mediated co-secretion with insulin, and acts as a physiological amplifier of glucose-mediated insulin secretion. Exhibits osteogenic properties by increasing osteoblast mitogenic activity through phosphoactivation of MAPK1 and MAPK3. This Neovison vison (American mink) protein is Insulin-like growth factor 2.